Reading from the N-terminus, the 120-residue chain is Large ribosomal subunit protein bL17 (120 aa).

This sequence belongs to the bacterial ribosomal protein bL17 family. As to quaternary structure, part of the 50S ribosomal subunit. Contacts protein L32.

The sequence is that of Large ribosomal subunit protein bL17 from Bacillus cereus (strain ATCC 14579 / DSM 31 / CCUG 7414 / JCM 2152 / NBRC 15305 / NCIMB 9373 / NCTC 2599 / NRRL B-3711).